The following is a 635-amino-acid chain: Threonine--tRNA ligase (635 aa).

The region spanning 1–61 (MIKITLKDGK…HKDSSLEILT (61 aa)) is the TGS domain. Positions 242-532 (DHRKLGKELD…LIEQYAGAFP (291 aa)) are catalytic. Cys333, His384, and His509 together coordinate Zn(2+).

Belongs to the class-II aminoacyl-tRNA synthetase family. In terms of assembly, homodimer. Zn(2+) serves as cofactor.

It is found in the cytoplasm. The catalysed reaction is tRNA(Thr) + L-threonine + ATP = L-threonyl-tRNA(Thr) + AMP + diphosphate + H(+). Its function is as follows. Catalyzes the attachment of threonine to tRNA(Thr) in a two-step reaction: L-threonine is first activated by ATP to form Thr-AMP and then transferred to the acceptor end of tRNA(Thr). Also edits incorrectly charged L-seryl-tRNA(Thr). This is Threonine--tRNA ligase from Clostridium botulinum (strain Kyoto / Type A2).